We begin with the raw amino-acid sequence, 185 residues long: Ribosome-recycling factor (185 aa).

It belongs to the RRF family.

The protein resides in the cytoplasm. Functionally, responsible for the release of ribosomes from messenger RNA at the termination of protein biosynthesis. May increase the efficiency of translation by recycling ribosomes from one round of translation to another. This Salinispora arenicola (strain CNS-205) protein is Ribosome-recycling factor.